An 884-amino-acid chain; its full sequence is Alanine--tRNA ligase (884 aa).

The Zn(2+) site is built by His574, His578, Cys675, and His679.

Belongs to the class-II aminoacyl-tRNA synthetase family. It depends on Zn(2+) as a cofactor.

Its subcellular location is the cytoplasm. It catalyses the reaction tRNA(Ala) + L-alanine + ATP = L-alanyl-tRNA(Ala) + AMP + diphosphate. Its function is as follows. Catalyzes the attachment of alanine to tRNA(Ala) in a two-step reaction: alanine is first activated by ATP to form Ala-AMP and then transferred to the acceptor end of tRNA(Ala). Also edits incorrectly charged Ser-tRNA(Ala) and Gly-tRNA(Ala) via its editing domain. The sequence is that of Alanine--tRNA ligase from Ralstonia nicotianae (strain ATCC BAA-1114 / GMI1000) (Ralstonia solanacearum).